The chain runs to 272 residues: Undecaprenyl-diphosphatase (272 aa).

8 helical membrane passes run 4-24, 43-63, 86-106, 109-129, 145-165, 186-206, 222-242, and 249-269; these read FEVI…FLPI, GGRV…CWLY, ISVL…VDFI, VLFS…IIFW, ITFK…IPGT, TEFS…FDLI, VGFV…VLFV, and VFAW…MFFN.

The protein belongs to the UppP family.

Its subcellular location is the cell inner membrane. It carries out the reaction di-trans,octa-cis-undecaprenyl diphosphate + H2O = di-trans,octa-cis-undecaprenyl phosphate + phosphate + H(+). In terms of biological role, catalyzes the dephosphorylation of undecaprenyl diphosphate (UPP). Confers resistance to bacitracin. The chain is Undecaprenyl-diphosphatase from Acinetobacter baumannii (strain SDF).